Here is a 201-residue protein sequence, read N- to C-terminus: Protein GrpE (201 aa).

This sequence belongs to the GrpE family. In terms of assembly, homodimer.

The protein localises to the cytoplasm. In terms of biological role, participates actively in the response to hyperosmotic and heat shock by preventing the aggregation of stress-denatured proteins, in association with DnaK and GrpE. It is the nucleotide exchange factor for DnaK and may function as a thermosensor. Unfolded proteins bind initially to DnaJ; upon interaction with the DnaJ-bound protein, DnaK hydrolyzes its bound ATP, resulting in the formation of a stable complex. GrpE releases ADP from DnaK; ATP binding to DnaK triggers the release of the substrate protein, thus completing the reaction cycle. Several rounds of ATP-dependent interactions between DnaJ, DnaK and GrpE are required for fully efficient folding. This chain is Protein GrpE, found in Shewanella denitrificans (strain OS217 / ATCC BAA-1090 / DSM 15013).